Consider the following 110-residue polypeptide: Glutaredoxin-1 (110 aa).

Residues isoleucine 7–asparagine 110 form the Glutaredoxin domain. Lysine 11 participates in a covalent cross-link: Glycyl lysine isopeptide (Lys-Gly) (interchain with G-Cter in ubiquitin). Glutathione contacts are provided by residues lysine 24–tyrosine 29, glutamine 63, valine 75, and asparagine 88–aspartate 89. An S-glutathionyl cysteine; alternate modification is found at cysteine 27. The cysteines at positions 27 and 30 are disulfide-linked.

The protein belongs to the glutaredoxin family.

The protein localises to the cytoplasm. The protein resides in the nucleus. It carries out the reaction 2 glutathione + H2O2 = glutathione disulfide + 2 H2O. The enzyme catalyses 1-chloro-2,4-dinitrobenzene + glutathione = 2,4-dinitrophenyl-S-glutathione + chloride + H(+). The catalysed reaction is RX + glutathione = an S-substituted glutathione + a halide anion + H(+). Its function is as follows. Component of the glutathione system which performs several activities such as glutathione-dependent oxidoreductase, glutathione peroxidase and glutathione S-transferase (GST) activity. The disulfide bond functions as an electron carrier in the glutathione-dependent synthesis of deoxyribonucleotides by the enzyme ribonucleotide reductase. In addition, it is also involved in reducing cytosolic protein- and non-protein-disulfides in a coupled system with glutathione reductase. Required for resistance to reactive oxygen species (ROS) by directly reducing hydroperoxides and for the detoxification of ROS-mediated damage. GRX1 is less active as an oxidoreductase than GRX2. The sequence is that of Glutaredoxin-1 (GRX1) from Saccharomyces cerevisiae (strain ATCC 204508 / S288c) (Baker's yeast).